The chain runs to 80 residues: Defensin-like protein 46 (80 aa).

The first 27 residues, 1-27 (MGSTKTLVTCFLTIILAVSLSNHNVLA), serve as a signal peptide directing secretion. 4 disulfides stabilise this stretch: C40/C78, C44/C65, C50/C76, and C54/C77.

It belongs to the DEFL family.

It is found in the secreted. This is Defensin-like protein 46 from Arabidopsis thaliana (Mouse-ear cress).